The primary structure comprises 372 residues: Protein RecA (372 aa).

Position 66-73 (66-73) interacts with ATP; it reads GPESSGKT. Residues 328–359 form a disordered region; that stretch reads GVGVRPEEPTATESGPDAATAESAPAVPAPAT. Over residues 345–359 the composition is skewed to low complexity; that stretch reads AATAESAPAVPAPAT.

The protein belongs to the RecA family.

Its subcellular location is the cytoplasm. In terms of biological role, can catalyze the hydrolysis of ATP in the presence of single-stranded DNA, the ATP-dependent uptake of single-stranded DNA by duplex DNA, and the ATP-dependent hybridization of homologous single-stranded DNAs. It interacts with LexA causing its activation and leading to its autocatalytic cleavage. The polypeptide is Protein RecA (Streptomyces ambofaciens).